Consider the following 27-residue polypeptide: NIVDVPCRDDYYRDSDGNCVCCKFGGA.

The protein resides in the secreted. It is found in the nematocyst. In terms of biological role, possible voltage-gated potassium channel (Kv) blocker. The chain is Toxin Bcg III 21.00 from Bunodosoma cangicum (Sea anemone).